Here is a 249-residue protein sequence, read N- to C-terminus: Proteasome subunit alpha (249 aa).

It belongs to the peptidase T1A family. The 20S proteasome core is composed of 14 alpha and 14 beta subunits that assemble into four stacked heptameric rings, resulting in a barrel-shaped structure. The two inner rings, each composed of seven catalytic beta subunits, are sandwiched by two outer rings, each composed of seven alpha subunits. The catalytic chamber with the active sites is on the inside of the barrel. Has a gated structure, the ends of the cylinder being occluded by the N-termini of the alpha-subunits. Is capped at one or both ends by the proteasome regulatory ATPase, PAN.

It localises to the cytoplasm. The formation of the proteasomal ATPase PAN-20S proteasome complex, via the docking of the C-termini of PAN into the intersubunit pockets in the alpha-rings, triggers opening of the gate for substrate entry. Interconversion between the open-gate and close-gate conformations leads to a dynamic regulation of the 20S proteasome proteolysis activity. In terms of biological role, component of the proteasome core, a large protease complex with broad specificity involved in protein degradation. In Methanosarcina mazei (strain ATCC BAA-159 / DSM 3647 / Goe1 / Go1 / JCM 11833 / OCM 88) (Methanosarcina frisia), this protein is Proteasome subunit alpha.